We begin with the raw amino-acid sequence, 366 residues long: MRVMAPRTLILLLSGALALTETWAGSHSMRYFYTSVSRPGRGEPRFISVGYVDDTQFVRFDSDAASPRGEPRAPWVEQEGPEYWDRETQKYKRQAQTDRVNLRKLRGYYNQSEDGSHTLQSMYGCDLGPDGRLLRGYSQFAYDGKDYIALNEDLRSWTAADTAAQVTQRKWEAARVAEQERAYLEGLCVEWLRRYLENGKETLQRAEPPKTHVTHHPLSDHEATLRCWALGFYPAEITLTWQRDGEDQTQDTELVETRPAGDGTFQKWAAVVVPSGQEQRYTCHMQHEGLPEPLTLRWEPSSQPTIPIVGIVVGLAVLVVLAVLGAVVTAMMCRRKSSGGKGGSCSQAACSNSAQGSDESLITCKA.

Positions 1 to 24 (MRVMAPRTLILLLSGALALTETWA) are cleaved as a signal peptide. The segment at 25–114 (GSHSMRYFYT…LRGYYNQSED (90 aa)) is alpha-1. Residues 25-308 (GSHSMRYFYT…EPSSQPTIPI (284 aa)) lie on the Extracellular side of the membrane. An N-linked (GlcNAc...) asparagine glycan is attached at asparagine 110. Positions 115 to 206 (GSHTLQSMYG…ENGKETLQRA (92 aa)) are alpha-2. 2 cysteine pairs are disulfide-bonded: cysteine 125–cysteine 188 and cysteine 227–cysteine 283. The alpha-3 stretch occupies residues 207 to 298 (EPPKTHVTHH…GLPEPLTLRW (92 aa)). The region spanning 209 to 297 (PKTHVTHHPL…EGLPEPLTLR (89 aa)) is the Ig-like C1-type domain. A connecting peptide region spans residues 299 to 308 (EPSSQPTIPI). Residues 309–332 (VGIVVGLAVLVVLAVLGAVVTAMM) traverse the membrane as a helical segment. Over 333-366 (CRRKSSGGKGGSCSQAACSNSAQGSDESLITCKA) the chain is Cytoplasmic.

Belongs to the MHC class I family. In terms of assembly, heterodimer of an alpha chain and a beta chain (beta-2-microglobulin).

It is found in the membrane. In terms of biological role, involved in the presentation of foreign antigens to the immune system. The polypeptide is Class I histocompatibility antigen, Gogo-C*0203 alpha chain (Gorilla gorilla gorilla (Western lowland gorilla)).